The sequence spans 261 residues: Putative hydro-lyase SSP0308 (261 aa).

The protein belongs to the D-glutamate cyclase family.

In Staphylococcus saprophyticus subsp. saprophyticus (strain ATCC 15305 / DSM 20229 / NCIMB 8711 / NCTC 7292 / S-41), this protein is Putative hydro-lyase SSP0308.